The chain runs to 343 residues: Cilia- and flagella-associated protein 36 (343 aa).

Phosphoserine is present on residues serine 85 and serine 147. A coiled-coil region spans residues 147–181 (SDLEQEEMKILREVLRKSKEEYDQEEERKRKKQSS). Residues 165–191 (KEEYDQEEERKRKKQSSEGKMEEPPIY) form a disordered region. The residue at position 201 (serine 201) is a Phosphoserine. The interval 286-323 (SMRKDMRAKQIQNTEQKGKPTREAEEMTEKPEMTAEEK) is disordered. Over residues 301 to 323 (QKGKPTREAEEMTEKPEMTAEEK) the composition is skewed to basic and acidic residues.

The protein belongs to the CFAP36 family. Interacts with ARL3. Widely expressed (at protein level).

It localises to the nucleus. The protein localises to the cytoplasm. Its subcellular location is the cell projection. It is found in the cilium. The protein resides in the flagellum. Its function is as follows. May act as an effector for ARL3. This is Cilia- and flagella-associated protein 36 from Rattus norvegicus (Rat).